The following is a 56-amino-acid chain: Large ribosomal subunit protein bL32 (56 aa).

The protein belongs to the bacterial ribosomal protein bL32 family.

In Prochlorococcus marinus (strain MIT 9301), this protein is Large ribosomal subunit protein bL32.